Consider the following 671-residue polypeptide: Pescadillo homolog (671 aa).

In terms of domain architecture, BRCT spans 317-403 (KVRELFRGLT…LMLPVTGYRI (87 aa)). Residues 548–584 (QALRKAQEKSRQTETSEARLQRKMSEVKRQEAATRKM) adopt a coiled-coil conformation. 2 disordered regions span residues 552 to 578 (KAQE…KRQE) and 643 to 671 (RRQR…KWVQ).

The protein belongs to the pescadillo family.

Its subcellular location is the nucleus. The protein localises to the nucleolus. It localises to the nucleoplasm. Required for maturation of ribosomal RNAs and formation of the large ribosomal subunit. In Leishmania infantum, this protein is Pescadillo homolog.